The chain runs to 469 residues: UDP-N-acetylmuramoylalanine--D-glutamate ligase (469 aa).

Position 125–131 (Gly125–Thr131) interacts with ATP.

The protein belongs to the MurCDEF family.

The protein localises to the cytoplasm. The enzyme catalyses UDP-N-acetyl-alpha-D-muramoyl-L-alanine + D-glutamate + ATP = UDP-N-acetyl-alpha-D-muramoyl-L-alanyl-D-glutamate + ADP + phosphate + H(+). It functions in the pathway cell wall biogenesis; peptidoglycan biosynthesis. Cell wall formation. Catalyzes the addition of glutamate to the nucleotide precursor UDP-N-acetylmuramoyl-L-alanine (UMA). This is UDP-N-acetylmuramoylalanine--D-glutamate ligase from Prochlorococcus marinus (strain NATL2A).